The chain runs to 156 residues: ATP synthase subunit b (156 aa).

The helical transmembrane segment at 11–31 (AIAFVLFVLFCMKYVWPPIMA) threads the bilayer.

This sequence belongs to the ATPase B chain family. In terms of assembly, F-type ATPases have 2 components, F(1) - the catalytic core - and F(0) - the membrane proton channel. F(1) has five subunits: alpha(3), beta(3), gamma(1), delta(1), epsilon(1). F(0) has three main subunits: a(1), b(2) and c(10-14). The alpha and beta chains form an alternating ring which encloses part of the gamma chain. F(1) is attached to F(0) by a central stalk formed by the gamma and epsilon chains, while a peripheral stalk is formed by the delta and b chains.

Its subcellular location is the cell inner membrane. Functionally, f(1)F(0) ATP synthase produces ATP from ADP in the presence of a proton or sodium gradient. F-type ATPases consist of two structural domains, F(1) containing the extramembraneous catalytic core and F(0) containing the membrane proton channel, linked together by a central stalk and a peripheral stalk. During catalysis, ATP synthesis in the catalytic domain of F(1) is coupled via a rotary mechanism of the central stalk subunits to proton translocation. Its function is as follows. Component of the F(0) channel, it forms part of the peripheral stalk, linking F(1) to F(0). This Cronobacter sakazakii (strain ATCC BAA-894) (Enterobacter sakazakii) protein is ATP synthase subunit b.